A 139-amino-acid chain; its full sequence is Holo-[acyl-carrier-protein] synthase (139 aa).

Mg(2+)-binding residues include aspartate 8 and glutamate 61.

The protein belongs to the P-Pant transferase superfamily. AcpS family. Requires Mg(2+) as cofactor.

It localises to the cytoplasm. The enzyme catalyses apo-[ACP] + CoA = holo-[ACP] + adenosine 3',5'-bisphosphate + H(+). Functionally, transfers the 4'-phosphopantetheine moiety from coenzyme A to a Ser of acyl-carrier-protein. The chain is Holo-[acyl-carrier-protein] synthase from Nitrobacter hamburgensis (strain DSM 10229 / NCIMB 13809 / X14).